A 101-amino-acid chain; its full sequence is Small ribosomal subunit protein bS18c (101 aa).

This sequence belongs to the bacterial ribosomal protein bS18 family. As to quaternary structure, part of the 30S ribosomal subunit.

The protein resides in the plastid. It is found in the chloroplast. This Panax ginseng (Korean ginseng) protein is Small ribosomal subunit protein bS18c.